We begin with the raw amino-acid sequence, 121 residues long: C-X-C motif chemokine 11-6 (121 aa).

Positions 1–20 (MKTLAAFLLLSCLIAGEVNG) are cleaved as a signal peptide. 2 disulfides stabilise this stretch: C29-C56 and C31-C73. The disordered stretch occupies residues 95-121 (QSVPHSTTTGTVKSSMTSSTSAPTAFK). Residues 100–115 (STTTGTVKSSMTSSTS) are compositionally biased toward low complexity.

This sequence belongs to the intercrine alpha (chemokine CxC) family.

It localises to the secreted. Its function is as follows. Ligand for cxcr3.2. Chemotactic for macrophages. This Danio rerio (Zebrafish) protein is C-X-C motif chemokine 11-6.